The primary structure comprises 305 residues: Dihydroorotate dehydrogenase B (NAD(+)), catalytic subunit (305 aa).

FMN-binding positions include serine 21 and 45 to 46; that span reads KG. Residues lysine 45 and 69-73 contribute to the substrate site; that span reads NAVGL. Asparagine 99 and asparagine 127 together coordinate FMN. Asparagine 127 contributes to the substrate binding site. Cysteine 130 acts as the Nucleophile in catalysis. FMN contacts are provided by lysine 165 and isoleucine 191. Residue 192–193 coordinates substrate; it reads NT. FMN contacts are provided by residues glycine 217, 243-244, and 265-266; these read GG and GT.

The protein belongs to the dihydroorotate dehydrogenase family. Type 1 subfamily. As to quaternary structure, heterotetramer of 2 PyrK and 2 PyrD type B subunits. The cofactor is FMN.

It localises to the cytoplasm. The catalysed reaction is (S)-dihydroorotate + NAD(+) = orotate + NADH + H(+). Its pathway is pyrimidine metabolism; UMP biosynthesis via de novo pathway; orotate from (S)-dihydroorotate (NAD(+) route): step 1/1. Catalyzes the conversion of dihydroorotate to orotate with NAD(+) as electron acceptor. This chain is Dihydroorotate dehydrogenase B (NAD(+)), catalytic subunit (pyrD), found in Parabacteroides distasonis (strain ATCC 8503 / DSM 20701 / CIP 104284 / JCM 5825 / NCTC 11152).